Here is a 589-residue protein sequence, read N- to C-terminus: MKRTHHCGQLDKTLAGQQVQLKGWVQRRRDLGQVIFLDLRDRSGIVQVVCSPEVSEEALKAADRVRNEYLVAVSGIVVERNEQAVNDKLATGAIEVHVRELEILNVSKSLPFQIEADTDAAEDVRLKYRYLDLRRPDMQEAFAMRHKIMKSVRDFLDADGYLEIETPMLTKSTPEGARDYLVPSRVHHGQFYALPQSPQIFKQLLMVSGFEKYFQIVRCFRDEDLRADRQPEFTQIDIETSFLDTEDILAMTEAMMEKLLKETHGLELKRPFSRMTYEEAMNRYGSDKPDTRFGMELIELSDVLKDTEFKVFKGALEAGGIIKGLTLKGGADKLSRKDIDALADFVKPYGAKGLAWLKVDDEGIKGPIAKFFNEAQTAALLAAMDAEAGDLLFFGADKKQVVFHALGALRLKFGKEFQLIDENAFHFLWVTDFPLVEYDEQAKRFVALHHPFTRPKAEDLDLMETHPEQVRAEAYDLVLNGFELGGGSQRIYERELQEKMFKLLGFSSEAAKEEFGFLLEAFDYGTPPHGGIALGLDRIVMLLARKSNLREVIAFPKTASASDLLTEAPNKVSVEQLIDLNLSIISKRS.

An L-aspartate-binding site is contributed by E175. The segment at 199 to 202 is aspartate; it reads QIFK. L-aspartate is bound at residue R221. ATP is bound by residues 221–223 and Q230; that span reads RDE. Position 449 (H449) interacts with L-aspartate. E483 is a binding site for ATP. R490 provides a ligand contact to L-aspartate. An ATP-binding site is contributed by 535–538; that stretch reads GLDR.

This sequence belongs to the class-II aminoacyl-tRNA synthetase family. Type 1 subfamily. Homodimer.

The protein localises to the cytoplasm. It carries out the reaction tRNA(Asp) + L-aspartate + ATP = L-aspartyl-tRNA(Asp) + AMP + diphosphate. In terms of biological role, catalyzes the attachment of L-aspartate to tRNA(Asp) in a two-step reaction: L-aspartate is first activated by ATP to form Asp-AMP and then transferred to the acceptor end of tRNA(Asp). This chain is Aspartate--tRNA ligase, found in Shouchella clausii (strain KSM-K16) (Alkalihalobacillus clausii).